A 710-amino-acid polypeptide reads, in one-letter code: Adenylosuccinate synthetase (710 aa).

Disordered regions lie at residues 1-51 (MPVR…PVPQ) and 84-111 (DEPP…GRSK). 2 stretches are compositionally biased toward polar residues: residues 10-27 (YNNS…STTA) and 101-111 (ANASSSSGRSK). GTP-binding positions include 180–186 (GDEGKGK) and 210–212 (GHT). Asp-181 acts as the Proton acceptor in catalysis. The Mg(2+) site is built by Asp-181 and Gly-210. Residues 181–184 (DEGK), 208–211 (NAGH), Thr-295, Lys-309, Gln-421, Thr-437, and Lys-567 contribute to the IMP site. His-211 (proton donor) is an active-site residue. 563–569 (AVTKKPR) provides a ligand contact to substrate. GTP-binding positions include Arg-569 and 697-699 (GNG).

The protein belongs to the adenylosuccinate synthetase family. In terms of assembly, homodimer. Mg(2+) serves as cofactor.

The protein localises to the cytoplasm. It carries out the reaction IMP + L-aspartate + GTP = N(6)-(1,2-dicarboxyethyl)-AMP + GDP + phosphate + 2 H(+). It participates in purine metabolism; AMP biosynthesis via de novo pathway; AMP from IMP: step 1/2. In terms of biological role, plays an important role in the salvage pathway for purine nucleotide biosynthesis. Catalyzes the first committed step in the biosynthesis of AMP from IMP. The sequence is that of Adenylosuccinate synthetase from Leishmania infantum.